Here is a 292-residue protein sequence, read N- to C-terminus: CCR4-NOT transcription complex subunit 8 (292 aa).

A divalent metal cation contacts are provided by Asp-40, Glu-42, Asp-161, and Asp-230.

Belongs to the CAF1 family. Component of the CCR4-NOT complex; distinct complexes seem to exist that differ in the participation of probably mutually exclusive catalytic subunits; the complex contains two deadenylase subunits, CNOT6 or CNOT6L, and CNOT7 or CNOT8. In the complex interacts directly with CNOT1. Interacts with BTG1, BTG2 and TOB1. Interacts with BTG4.

Its subcellular location is the cytoplasm. It localises to the nucleus. It carries out the reaction Exonucleolytic cleavage of poly(A) to 5'-AMP.. Functionally, has 3'-5' poly(A) exoribonuclease activity for synthetic poly(A) RNA substrate. Its function seems to be partially redundant with that of CNOT7. Catalytic component of the CCR4-NOT complex which is linked to various cellular processes including bulk mRNA degradation, miRNA-mediated repression, translational repression during translational initiation and general transcription regulation. During miRNA-mediated repression the complex also seems to act as translational repressor during translational initiation. Additional complex functions may be a consequence of its influence on mRNA expression. Associates with members of the BTG family such as TOB1 and BTG2 and is required for their anti-proliferative activity. The chain is CCR4-NOT transcription complex subunit 8 (CNOT8) from Homo sapiens (Human).